The sequence spans 834 residues: MTEPKIDRRQLLKLEAAAIAAAAAGMPTVARAANLVTEREATELKWDKAACRFCGTGCSVMVATKDNRVVATHGDIKAEVNRGLNCVKGYFLSKIMYGHDRLTHPMLRKTGGQYDKNGEFTPVSWDEAFDVMALKFKDALKKRGPSGVGMFGSGQWTIWEGYAASKLFKAGFRTNNIDPNARHCMASAVAGMMRTFGIDEPAGCYDDIEATDAFVLWGSNMAEMHPILWTRVTDRRLSAPHVKVAVLSTFEHRSFDLADVGMVFKPQTDLYILNAIANHIISTGRVNKDFVSAHTVFKKGQTDIGYGLRPEHPLQKKATGAAKANDATDISFDEYAKFVSDYTLEKAADMSGVPLNRLQALAELYADPKTKVVSFWTMGFNQHTRGVWCNNLVYNIHLLTGKIAEAGNSPFSLTGQPSACGTAREVGTFSHRLPADMVVTNKEHRTKAEHIWQLPEGTIPDKPGYHAVLQSRMLKDGLLNAYWVQVNNNLQAGPNANEETYPGFRNPDNFIVVSDAYPSVTALAADLILPTAMWVEKEGAYGNAERRTQFWHQLVSAPGEARSDLWQLMEFSKRFKIEDVWPEELIAKKPDVRGKTLFDVLYKNGQVDKFPLDQIEPGYANDESKAFGFYVHKGLFEEYASFGRGHGHDLAPFEAYHKERGLRWPVVDGKETRWRFREGSDPYVKAGTGVQFYGFPDGKARIFALPYEPPAESPDKDYPFWLSTGRVVEHWHSGTMTRRVPELYKAFPEAVCFMHPDDAQEANLRRGDEVKVASRRGFIRARVETRGRDKPPRGLVFVPWFDESKLINKVTLDATDPISLQTDYKKCAVRIERV.

The segment at residues 1–32 is a signal peptide (tat-type signal); that stretch reads MTEPKIDRRQLLKLEAAAIAAAAAGMPTVARA. The 4Fe-4S Mo/W bis-MGD-type domain occupies 44–100; it reads LKWDKAACRFCGTGCSVMVATKDNRVVATHGDIKAEVNRGLNCVKGYFLSKIMYGHD. [4Fe-4S] cluster is bound by residues Cys51, Cys54, Cys58, and Cys86. Mo-bis(molybdopterin guanine dinucleotide) contacts are provided by residues Lys88, Gln155, Asn180, Cys184, 217–224, 248–252, 267–269, Met378, Gln382, Asn488, 514–515, Lys537, Asp564, and 724–733; these read WGSNMAEM, STFEH, QTD, SD, and TGRVVEHWHS. Trp800 provides a ligand contact to substrate. Asn808 and Lys825 together coordinate Mo-bis(molybdopterin guanine dinucleotide).

The protein belongs to the prokaryotic molybdopterin-containing oxidoreductase family. NasA/NapA/NarB subfamily. As to quaternary structure, component of the periplasmic nitrate reductase NapAB complex composed of NapA and NapB. It depends on [4Fe-4S] cluster as a cofactor. The cofactor is Mo-bis(molybdopterin guanine dinucleotide). Predicted to be exported by the Tat system. The position of the signal peptide cleavage has not been experimentally proven.

Its subcellular location is the periplasm. It catalyses the reaction 2 Fe(II)-[cytochrome] + nitrate + 2 H(+) = 2 Fe(III)-[cytochrome] + nitrite + H2O. In terms of biological role, catalytic subunit of the periplasmic nitrate reductase complex NapAB. Receives electrons from NapB and catalyzes the reduction of nitrate to nitrite. This chain is Periplasmic nitrate reductase, found in Bradyrhizobium sp. (strain ORS 278).